Consider the following 321-residue polypeptide: Lipoyl synthase (321 aa).

[4Fe-4S] cluster is bound by residues Cys68, Cys73, Cys79, Cys94, Cys98, Cys101, and Ser308. The Radical SAM core domain occupies 80–297 (FNHGTATFMI…KAAAMDMGFT (218 aa)).

It belongs to the radical SAM superfamily. Lipoyl synthase family. The cofactor is [4Fe-4S] cluster.

It localises to the cytoplasm. The catalysed reaction is [[Fe-S] cluster scaffold protein carrying a second [4Fe-4S](2+) cluster] + N(6)-octanoyl-L-lysyl-[protein] + 2 oxidized [2Fe-2S]-[ferredoxin] + 2 S-adenosyl-L-methionine + 4 H(+) = [[Fe-S] cluster scaffold protein] + N(6)-[(R)-dihydrolipoyl]-L-lysyl-[protein] + 4 Fe(3+) + 2 hydrogen sulfide + 2 5'-deoxyadenosine + 2 L-methionine + 2 reduced [2Fe-2S]-[ferredoxin]. Its pathway is protein modification; protein lipoylation via endogenous pathway; protein N(6)-(lipoyl)lysine from octanoyl-[acyl-carrier-protein]: step 2/2. In terms of biological role, catalyzes the radical-mediated insertion of two sulfur atoms into the C-6 and C-8 positions of the octanoyl moiety bound to the lipoyl domains of lipoate-dependent enzymes, thereby converting the octanoylated domains into lipoylated derivatives. The chain is Lipoyl synthase from Erwinia tasmaniensis (strain DSM 17950 / CFBP 7177 / CIP 109463 / NCPPB 4357 / Et1/99).